Consider the following 485-residue polypeptide: Probable WRKY transcription factor 10 (485 aa).

2 disordered regions span residues 43–62 and 215–293; these read IFPQESLPRDHTDQSGQRSG and ISIE…SKTQ. Over residues 216-264 the composition is skewed to acidic residues; that stretch reads SIEDSESEDGNKDDDDEDFQYEDEDEDQYDQDQDVDEDEEEEKDEDNVA. The WRKY DNA-binding region spans 301–366; sequence SDEDNPNDGY…YDGIHNHPSP (66 aa). 4 residues coordinate Zn(2+): C332, C337, H361, and H363. The disordered stretch occupies residues 358-417; it reads DGIHNHPSPPARRSNSSSRNRSAGATIPQNQNDRTSRLGRAPPTPTPPTPPPSSYTPEEM. Low complexity predominate over residues 368 to 380; that stretch reads ARRSNSSSRNRSA. The segment covering 399–411 has biased composition (pro residues); the sequence is PPTPTPPTPPPSS.

Belongs to the WRKY group I family. Interacts with IKU1. In terms of tissue distribution, expressed in male gametophytes (pollen) and in the endosperm of fertilized ovules.

The protein localises to the nucleus. In terms of biological role, transcription factor. Interacts specifically with the W box (5'-(T)TGAC[CT]-3'), a frequently occurring elicitor-responsive cis-acting element. Modulates seed size by negatively regulating the cellularization of syncytial endosperm. In Arabidopsis thaliana (Mouse-ear cress), this protein is Probable WRKY transcription factor 10 (WRKY10).